We begin with the raw amino-acid sequence, 488 residues long: Ribulose bisphosphate carboxylase large chain (488 aa).

The substrate site is built by Asn127 and Thr177. The active-site Proton acceptor is the Lys179. Lys181 provides a ligand contact to substrate. 3 residues coordinate Mg(2+): Lys205, Asp207, and Glu208. Lys205 carries the N6-carboxylysine modification. His297 functions as the Proton acceptor in the catalytic mechanism. Arg298, His330, and Ser382 together coordinate substrate.

It belongs to the RuBisCO large chain family. Type I subfamily. Heterohexadecamer of 8 large chains and 8 small chains. Requires Mg(2+) as cofactor.

The protein resides in the plastid. It is found in the chloroplast. It catalyses the reaction 2 (2R)-3-phosphoglycerate + 2 H(+) = D-ribulose 1,5-bisphosphate + CO2 + H2O. The enzyme catalyses D-ribulose 1,5-bisphosphate + O2 = 2-phosphoglycolate + (2R)-3-phosphoglycerate + 2 H(+). Functionally, ruBisCO catalyzes two reactions: the carboxylation of D-ribulose 1,5-bisphosphate, the primary event in carbon dioxide fixation, as well as the oxidative fragmentation of the pentose substrate in the photorespiration process. Both reactions occur simultaneously and in competition at the same active site. The chain is Ribulose bisphosphate carboxylase large chain from Chrysotila carterae (Marine alga).